Here is a 316-residue protein sequence, read N- to C-terminus: Cilia-and flagella-associated protein 96 (316 aa).

The tract at residues 220 to 242 (EEKKEVSFKPFKPSSPGKKAGGM) is disordered. Residues 227 to 237 (FKPFKPSSPGK) show a composition bias toward low complexity.

The protein belongs to the CFAP96 family.

The protein localises to the cytoplasm. Its subcellular location is the cytoskeleton. It localises to the microtubule organizing center. The protein resides in the centrosome. This chain is Cilia-and flagella-associated protein 96 (Cfap96), found in Mus musculus (Mouse).